The primary structure comprises 612 residues: UvrABC system protein C (612 aa).

The GIY-YIG domain occupies 20–98; it reads THSGVYRMLD…IKQHRPKYNI (79 aa). The region spanning 208-243 is the UVR domain; that stretch reads SSVLEEISAKMYQASEDMEYEKAQVYRDQLVVLRKL.

This sequence belongs to the UvrC family. In terms of assembly, interacts with UvrB in an incision complex.

The protein localises to the cytoplasm. In terms of biological role, the UvrABC repair system catalyzes the recognition and processing of DNA lesions. UvrC both incises the 5' and 3' sides of the lesion. The N-terminal half is responsible for the 3' incision and the C-terminal half is responsible for the 5' incision. In Francisella tularensis subsp. tularensis (strain FSC 198), this protein is UvrABC system protein C.